Consider the following 569-residue polypeptide: Acyl-CoA transferase FVEG_12629 (569 aa).

The protein belongs to the CoA-transferase III family.

Its function is as follows. Acyl-CoA transferase; part of the Fusarium detoxification of benzoxazolinone cluster 2 (FDB2) involved in the degradation of benzoxazolinones produced by the host plant. Maize, wheat, and rye produce the 2 benzoxazinone phytoanticipins 2,4-dihy-droxy-7-methoxy-1,4-benzoxazin-3-one (DIMBOA) and 2,4-dihydroxy-1,4-benzoxazin-3-one (DIBOA) that, due to their inherent instability once released, spontaneously degrade to the more stable corresponding benzoxazolinones, 6-methoxy-2-benzoxazolinone (MBOA) and 2-benzoxazolinone (BOA), respectively. The first step in the detoxification of benzoxazolinones involves the hydrolysis of the cyclic ester bond of benzoxazolinones by the FDB1 cluster gamma-lactamase MBL1 to aminophenols. MBL1 is able to convert BOA into 2-aminophenol (2-AP), as well as MBOA into 5-methoxy-2-aminophenol (2-AMP). The FDB2 cluster N-malonyltransferase FDB2/NAT1 then metabolizes aminophenols via N-malonylation to non-toxic malonamic acids. FDB2/NAT1 converts 2-AP into N-(2-hydroxyphenyl) malonamic acid (HPMA) and 2-AMP into N-(2-hydroxy-4-methoxyphenyl) malonamic acid (HMPMA). The duplicated dienlactone hydrolases DLH1 and DLH2 may provide redundant function for hydrolyzing the lactone moiety in the BOA molecule. The roles of the amidases an other enzymes encoded by the 2 FDB clusters have not been identified so far. This is Acyl-CoA transferase FVEG_12629 from Gibberella moniliformis (strain M3125 / FGSC 7600) (Maize ear and stalk rot fungus).